The sequence spans 148 residues: MKRIVATGTFDILHPGHIYYLEESRKLGDELHVIIARDENVRHKPKPVIPEQQRLRMVQSLKPVDYARLGSTTDIFEPIREIQPDIITLGFNQFFNEEKLKCDLEENGISAEVVRIEGYSGEGFCSSRNIMKQILIRRCKELQDDSTD.

ATP-binding positions include 9 to 10, 14 to 17, Asn-92, and Tyr-119; these read TF and HPGH.

It belongs to the archaeal FAD synthase family. Homodimer. A divalent metal cation is required as a cofactor.

It catalyses the reaction FMN + ATP + H(+) = FAD + diphosphate. Its pathway is cofactor biosynthesis; FAD biosynthesis; FAD from FMN: step 1/1. In terms of biological role, catalyzes the transfer of the AMP portion of ATP to flavin mononucleotide (FMN) to produce flavin adenine dinucleotide (FAD) coenzyme. The protein is FAD synthase of Methanolacinia petrolearia (strain DSM 11571 / OCM 486 / SEBR 4847) (Methanoplanus petrolearius).